Here is a 192-residue protein sequence, read N- to C-terminus: Ion-translocating oxidoreductase complex subunit B (192 aa).

Residues 1–26 (MNTIWIAVGALTFLGLVFGAILGYAS) are hydrophobic. Residues 32-91 (EDDPVVEKIDAILPQSQCGQCGYPGCRPYAEAVGLQGEKINRCAPGGEAVMLKIADLLNV) enclose the 4Fe-4S domain. [4Fe-4S] cluster-binding residues include Cys49, Cys52, Cys57, Cys74, Cys117, Cys120, Cys123, Cys127, Cys147, Cys150, Cys153, and Cys157. 2 4Fe-4S ferredoxin-type domains span residues 108–137 (MLAVIDENHCIGCTKCIQACPVDAIVGATR) and 138–167 (AMHTVMSDLCTGCNLCVDPCPTHCIELRPV).

Belongs to the 4Fe4S bacterial-type ferredoxin family. RnfB subfamily. As to quaternary structure, the complex is composed of six subunits: RsxA, RsxB, RsxC, RsxD, RsxE and RsxG. It depends on [4Fe-4S] cluster as a cofactor.

It localises to the cell inner membrane. Its function is as follows. Part of a membrane-bound complex that couples electron transfer with translocation of ions across the membrane. Required to maintain the reduced state of SoxR. The polypeptide is Ion-translocating oxidoreductase complex subunit B (Salmonella arizonae (strain ATCC BAA-731 / CDC346-86 / RSK2980)).